Reading from the N-terminus, the 609-residue chain is Alpha-glycerophosphate oxidase (609 aa).

FAD is bound at residue 21–49; sequence DVLIIGGGITGAGVAVQTAAAGMKTVLLE.

It depends on FAD as a cofactor.

Its subcellular location is the cytoplasm. It catalyses the reaction sn-glycerol 3-phosphate + O2 = dihydroxyacetone phosphate + H2O2. The protein operates within membrane lipid metabolism; glycerophospholipid metabolism. The sequence is that of Alpha-glycerophosphate oxidase (glpO) from Enterococcus casseliflavus (Enterococcus flavescens).